Reading from the N-terminus, the 408-residue chain is 3-ketoacyl-CoA thiolase A, peroxisomal (408 aa).

Cys112 (acyl-thioester intermediate) is an active-site residue. Residues His366 and Cys394 each act as proton acceptor in the active site.

It belongs to the thiolase-like superfamily. Thiolase family. As to quaternary structure, homodimer.

Its subcellular location is the peroxisome. It carries out the reaction an acyl-CoA + acetyl-CoA = a 3-oxoacyl-CoA + CoA. It functions in the pathway lipid metabolism; fatty acid metabolism. This Candida tropicalis (Yeast) protein is 3-ketoacyl-CoA thiolase A, peroxisomal.